Consider the following 224-residue polypeptide: MQILLVEDDNTLFQELKKELEQWDFNVAGIEDFGKVMDTFESFNPEIVILDVQLPKYDGFYWCRKMREVSNVPILFLSSRDNPMDQVMSMELGADDYMQKPFYTNVLIAKLQAIYRRVYEFTAEEKRTLTWQDAVVDLSKDSIQKGDDTIFLSKTEMIILEILITKKNQIVSRDTIITALWDDEAFVSDNTLTVNVSRLRKKLSEISMDSAIETKVGKGYMAHE.

Positions Gln-2 to Tyr-115 constitute a Response regulatory domain. Asp-51 carries the post-translational modification 4-aspartylphosphate. The segment at residues Lys-126–Glu-224 is a DNA-binding region (ompR/PhoB-type). Thr-128, Thr-130, and Thr-149 each carry phosphothreonine.

As to quaternary structure, interacts with GraX. Post-translationally, phosphorylated by GraS. Phosphorylated by Stk1; phosphorylation increases the DNA-binding activity of GraR.

The protein resides in the cytoplasm. In terms of biological role, member of the two-component regulatory system GraR/GraS involved in resistance against cationic antimicrobial peptides (CAMPs). Upon phosphorylation by GraS, functions as a transcription regulator by direct binding to promoter regions of target genes such as adhesins, exoproteins, transporters, toxins, and proteins involved in cell wall synthesis. Down-regulates the expression of many genes involved in RNA and amino acid synthesis or glycolysis. This chain is Response regulator protein GraR (graR), found in Staphylococcus aureus (strain Mu50 / ATCC 700699).